Here is a 392-residue protein sequence, read N- to C-terminus: Enoyl-[acyl-carrier-protein] reductase [NADH] (392 aa).

Residues 46-51 (GSSSGY), 72-73 (LE), 108-109 (DA), and 136-137 (VA) each bind NAD(+). Residue Tyr-225 coordinates substrate. Tyr-235 acts as the Proton donor in catalysis. NAD(+) contacts are provided by residues Lys-244 and 273 to 275 (LVT).

This sequence belongs to the TER reductase family. Monomer.

It catalyses the reaction a 2,3-saturated acyl-[ACP] + NAD(+) = a (2E)-enoyl-[ACP] + NADH + H(+). It functions in the pathway lipid metabolism; fatty acid biosynthesis. Functionally, involved in the final reduction of the elongation cycle of fatty acid synthesis (FAS II). Catalyzes the reduction of a carbon-carbon double bond in an enoyl moiety that is covalently linked to an acyl carrier protein (ACP). The chain is Enoyl-[acyl-carrier-protein] reductase [NADH] from Streptomyces avermitilis (strain ATCC 31267 / DSM 46492 / JCM 5070 / NBRC 14893 / NCIMB 12804 / NRRL 8165 / MA-4680).